Consider the following 302-residue polypeptide: Methionyl-tRNA formyltransferase (302 aa).

A (6S)-5,6,7,8-tetrahydrofolate-binding site is contributed by 108 to 111; sequence SLLP. Residues 279 to 288 are compositionally biased toward basic and acidic residues; it reads KRPMEPEEFL. Residues 279–302 are disordered; the sequence is KRPMEPEEFLRGFPLPEGSRAHTS.

Belongs to the Fmt family.

The enzyme catalyses L-methionyl-tRNA(fMet) + (6R)-10-formyltetrahydrofolate = N-formyl-L-methionyl-tRNA(fMet) + (6S)-5,6,7,8-tetrahydrofolate + H(+). Its function is as follows. Attaches a formyl group to the free amino group of methionyl-tRNA(fMet). The formyl group appears to play a dual role in the initiator identity of N-formylmethionyl-tRNA by promoting its recognition by IF2 and preventing the misappropriation of this tRNA by the elongation apparatus. In Cereibacter sphaeroides (strain ATCC 17023 / DSM 158 / JCM 6121 / CCUG 31486 / LMG 2827 / NBRC 12203 / NCIMB 8253 / ATH 2.4.1.) (Rhodobacter sphaeroides), this protein is Methionyl-tRNA formyltransferase.